A 299-amino-acid chain; its full sequence is ATP phosphoribosyltransferase (299 aa).

It belongs to the ATP phosphoribosyltransferase family. Long subfamily. In terms of assembly, equilibrium between an active dimeric form, an inactive hexameric form and higher aggregates. Interconversion between the various forms is largely reversible and is influenced by the natural substrates and inhibitors of the enzyme. Requires Mg(2+) as cofactor.

The protein resides in the cytoplasm. It carries out the reaction 1-(5-phospho-beta-D-ribosyl)-ATP + diphosphate = 5-phospho-alpha-D-ribose 1-diphosphate + ATP. The protein operates within amino-acid biosynthesis; L-histidine biosynthesis; L-histidine from 5-phospho-alpha-D-ribose 1-diphosphate: step 1/9. Its activity is regulated as follows. Feedback inhibited by histidine. Its function is as follows. Catalyzes the condensation of ATP and 5-phosphoribose 1-diphosphate to form N'-(5'-phosphoribosyl)-ATP (PR-ATP). Has a crucial role in the pathway because the rate of histidine biosynthesis seems to be controlled primarily by regulation of HisG enzymatic activity. This chain is ATP phosphoribosyltransferase, found in Salmonella enteritidis PT4 (strain P125109).